The following is a 603-amino-acid chain: Aspartate--tRNA(Asp/Asn) ligase (603 aa).

Glu182 contacts L-aspartate. The aspartate stretch occupies residues 206–209 (QLFK). Position 228 (Arg228) interacts with L-aspartate. ATP contacts are provided by residues 228-230 (RDE) and Gln237. L-aspartate is bound at residue His454. An ATP-binding site is contributed by Glu500. Residue Arg507 participates in L-aspartate binding. Position 552–555 (552–555 (GLDR)) interacts with ATP.

Belongs to the class-II aminoacyl-tRNA synthetase family. Type 1 subfamily. In terms of assembly, homodimer.

The protein resides in the cytoplasm. The enzyme catalyses tRNA(Asx) + L-aspartate + ATP = L-aspartyl-tRNA(Asx) + AMP + diphosphate. Aspartyl-tRNA synthetase with relaxed tRNA specificity since it is able to aspartylate not only its cognate tRNA(Asp) but also tRNA(Asn). Reaction proceeds in two steps: L-aspartate is first activated by ATP to form Asp-AMP and then transferred to the acceptor end of tRNA(Asp/Asn). The sequence is that of Aspartate--tRNA(Asp/Asn) ligase from Aquifex aeolicus (strain VF5).